Here is a 643-residue protein sequence, read N- to C-terminus: tRNA 5-methylaminomethyl-2-thiouridine biosynthesis bifunctional protein MnmC (643 aa).

The interval 1 to 223 (MPDRLVSATL…VDDRLVGDYA (223 aa)) is tRNA (mnm(5)s(2)U34)-methyltransferase. The tract at residues 247–643 (IGAGLAGCAV…LRARRVGSAG (397 aa)) is FAD-dependent cmnm(5)s(2)U34 oxidoreductase.

This sequence in the N-terminal section; belongs to the methyltransferase superfamily. tRNA (mnm(5)s(2)U34)-methyltransferase family. In the C-terminal section; belongs to the DAO family. The cofactor is FAD.

Its subcellular location is the cytoplasm. It catalyses the reaction 5-aminomethyl-2-thiouridine(34) in tRNA + S-adenosyl-L-methionine = 5-methylaminomethyl-2-thiouridine(34) in tRNA + S-adenosyl-L-homocysteine + H(+). Catalyzes the last two steps in the biosynthesis of 5-methylaminomethyl-2-thiouridine (mnm(5)s(2)U) at the wobble position (U34) in tRNA. Catalyzes the FAD-dependent demodification of cmnm(5)s(2)U34 to nm(5)s(2)U34, followed by the transfer of a methyl group from S-adenosyl-L-methionine to nm(5)s(2)U34, to form mnm(5)s(2)U34. The sequence is that of tRNA 5-methylaminomethyl-2-thiouridine biosynthesis bifunctional protein MnmC from Burkholderia cenocepacia (strain HI2424).